The primary structure comprises 283 residues: MGNIQYLAAIPSPPQGVWHLGPVPIRAYALCIIVGIFVAMKIGSVRYQQRGGNPDLVIDAGIVAVIAGIIGGRLYHVLTDNQKYFCADCNPVDVFKITNGGLGIWGAVALGTIAVYFYLKKKGVAFALFADAVAPGIILAQAIGRLGNWFNQELYGRETSVPWALEIYYRVDASGKFAPLTGHSTGEVMATVHPTFLYEMIWNLVIFAVLLWADKKFQLGHGRVFALYVAGYTAGRFVVENMRADDATMVFGLRINVIVSVVVCAIAVGALFALRRGRESISS.

A run of 4 helical transmembrane segments spans residues 20-40 (LGPV…FVAM), 51-71 (GGNP…GIIG), 97-117 (ITNG…AVYF), and 123-143 (GVAF…AQAI). An a 1,2-diacyl-sn-glycero-3-phospho-(1'-sn-glycerol)-binding site is contributed by R145. The next 2 membrane-spanning stretches (helical) occupy residues 192-212 (VHPT…VLLW) and 255-275 (INVI…FALR).

This sequence belongs to the Lgt family.

The protein localises to the cell membrane. The enzyme catalyses L-cysteinyl-[prolipoprotein] + a 1,2-diacyl-sn-glycero-3-phospho-(1'-sn-glycerol) = an S-1,2-diacyl-sn-glyceryl-L-cysteinyl-[prolipoprotein] + sn-glycerol 1-phosphate + H(+). It participates in protein modification; lipoprotein biosynthesis (diacylglyceryl transfer). Functionally, catalyzes the transfer of the diacylglyceryl group from phosphatidylglycerol to the sulfhydryl group of the N-terminal cysteine of a prolipoprotein, the first step in the formation of mature lipoproteins. In Corynebacterium diphtheriae (strain ATCC 700971 / NCTC 13129 / Biotype gravis), this protein is Phosphatidylglycerol--prolipoprotein diacylglyceryl transferase.